Reading from the N-terminus, the 538-residue chain is Cytochrome P450 monooxygenase flvC (538 aa).

The chain crosses the membrane as a helical span at residues 17–37 (TVLIAGLLVYWVGSAIFLAVL). Residue cysteine 478 coordinates heme.

This sequence belongs to the cytochrome P450 family. The cofactor is heme.

It is found in the membrane. The enzyme catalyses pre-flavunoidine + reduced [NADPH--hemoprotein reductase] + O2 = 10-hydroxy-pre-flavunoidine + oxidized [NADPH--hemoprotein reductase] + H2O + H(+). It participates in secondary metabolite biosynthesis; terpenoid biosynthesis. Functionally, cytochrome P450 monooxygenase; part of the gene cluster that mediates the biosynthesis of flavunoidine, an alkaloidal terpenoid with a tetracyclic cage-like core connected to dimethylcadaverine via a C-N bond and acylated with 5,5-dimethyl-L-pipecolate. The tetracyclic core is synthesized by the terpene cyclase flvE and the cytochrome P450 monooxygenase flvD. The terpene cyclase flvE catalyzes the cyclization of farnesyl pyrophosphate (FPP) to form (1R,4R,5S)-(+)-acoradiene and the cytochrome P450 monooxygenase flvD is then responsible for oxidative conversion of (1R,4R,5S)-(+)-acoradiene into the tetracyclic cage present in the final product flavunoidine. In parallel, the N-methyltransferase flvH dimethylates L-lysine to give N,N-dimethyl-L-Lysin which is decarboxylated by flvG to afford dimethylcadaverine. The terpene cyclase-like protein flvF is the enzyme that attaches the dimethylcadaverine precusor at the C-7 of the tetracyclic cage to yield pre-flavunoidine. The cytochrome monooxygenase flvC hydroxylates the C-10 position of pre-flavunoidine whereas the NRPS flvI acylates the terpenoid core at the hydroxylated C-10 with dimethylpipecolate to yield final flavunoidine. The bifunctional enzyme flvA and the dehydrogenase flvB are responsible for the synthesis of the dimethylpipecolate precursor. The PLP-dependent lyase domain of flvA might use L-O-acetyl-homoserine and alpha-keto-isovalerate to form an intermediary ketone that can cyclize intramolecularly to yield an imine. The imine can be reduced by flvB to yield the 6-carboxylated pipecolate. The C-terminal alpha-KG-dependent oxygenase domain of flvA is then proposed to catalyze the decarboxylation to yield dimethylpipecolate. The chain is Cytochrome P450 monooxygenase flvC from Aspergillus flavus (strain ATCC 200026 / FGSC A1120 / IAM 13836 / NRRL 3357 / JCM 12722 / SRRC 167).